The sequence spans 250 residues: UDP-2,3-diacylglucosamine hydrolase (250 aa).

Aspartate 8, histidine 10, aspartate 41, asparagine 79, and histidine 115 together coordinate Mn(2+). Position 79–80 (79–80 (NH)) interacts with substrate. Substrate is bound by residues aspartate 123, threonine 165, lysine 168, and histidine 196. Residues histidine 196 and histidine 198 each coordinate Mn(2+).

This sequence belongs to the LpxH family. The cofactor is Mn(2+).

The protein localises to the cell inner membrane. The enzyme catalyses UDP-2-N,3-O-bis[(3R)-3-hydroxytetradecanoyl]-alpha-D-glucosamine + H2O = 2-N,3-O-bis[(3R)-3-hydroxytetradecanoyl]-alpha-D-glucosaminyl 1-phosphate + UMP + 2 H(+). Its pathway is glycolipid biosynthesis; lipid IV(A) biosynthesis; lipid IV(A) from (3R)-3-hydroxytetradecanoyl-[acyl-carrier-protein] and UDP-N-acetyl-alpha-D-glucosamine: step 4/6. Hydrolyzes the pyrophosphate bond of UDP-2,3-diacylglucosamine to yield 2,3-diacylglucosamine 1-phosphate (lipid X) and UMP by catalyzing the attack of water at the alpha-P atom. Involved in the biosynthesis of lipid A, a phosphorylated glycolipid that anchors the lipopolysaccharide to the outer membrane of the cell. The chain is UDP-2,3-diacylglucosamine hydrolase from Blochmanniella pennsylvanica (strain BPEN).